The chain runs to 401 residues: Acetate kinase (401 aa).

Asn7 contributes to the Mg(2+) binding site. An ATP-binding site is contributed by Lys14. Arg92 contributes to the substrate binding site. The Proton donor/acceptor role is filled by Asp149. ATP-binding positions include 209-213, 283-285, and 331-335; these read HLGNG, DAR, and GLGEN. Glu385 is a Mg(2+) binding site.

It belongs to the acetokinase family. Homodimer. Mg(2+) serves as cofactor. Mn(2+) is required as a cofactor.

Its subcellular location is the cytoplasm. It catalyses the reaction acetate + ATP = acetyl phosphate + ADP. Its pathway is metabolic intermediate biosynthesis; acetyl-CoA biosynthesis; acetyl-CoA from acetate: step 1/2. Catalyzes the formation of acetyl phosphate from acetate and ATP. Can also catalyze the reverse reaction. In Helicobacter pylori (strain Shi470), this protein is Acetate kinase.